We begin with the raw amino-acid sequence, 188 residues long: MHRARWLTPVIPALWEAEAGRSRGQEIETILANKKQSAMPWDQDPEQSTGNYSEDEQNGKQKWREEGEAGRKREREKEEKNEKELQDEQENKRKRENEKQKQYPEKRLVSKSLMHTLWAKFKLNRCPTIQESLSLSFEFDMTHKQISQWFCKTRKKYNKEMSKRKHKKKHMRWRSLCCQGWSRTPALK.

A disordered region spans residues Glu-28–Lys-106. Positions Gln-57–Lys-106 are enriched in basic and acidic residues. Residues Gln-102–Met-161 constitute a DNA-binding region (homeobox).

It localises to the nucleus. This chain is NANOG neighbor homeobox (NANOGNB), found in Homo sapiens (Human).